A 103-amino-acid polypeptide reads, in one-letter code: Large ribosomal subunit protein uL23 (103 aa).

It belongs to the universal ribosomal protein uL23 family. As to quaternary structure, part of the 50S ribosomal subunit. Contacts protein L29, and trigger factor when it is bound to the ribosome.

One of the early assembly proteins it binds 23S rRNA. One of the proteins that surrounds the polypeptide exit tunnel on the outside of the ribosome. Forms the main docking site for trigger factor binding to the ribosome. This is Large ribosomal subunit protein uL23 from Pelodictyon phaeoclathratiforme (strain DSM 5477 / BU-1).